The primary structure comprises 195 residues: C2 domain-containing protein DDB_G0290753 (195 aa).

One can recognise a C2 domain in the interval 38 to 161 (KKLTKETKFE…NIKKYSYTFK (124 aa)). Ca(2+) is bound by residues Asp-72, Asp-78, Asp-131, Asp-133, and Asp-139.

It depends on Ca(2+) as a cofactor.

The protein is C2 domain-containing protein DDB_G0290753 of Dictyostelium discoideum (Social amoeba).